Consider the following 69-residue polypeptide: Large ribosomal subunit protein bL31 (69 aa).

Residues Cys16, Cys18, Cys36, and Cys39 each coordinate Zn(2+).

This sequence belongs to the bacterial ribosomal protein bL31 family. Type A subfamily. As to quaternary structure, part of the 50S ribosomal subunit. Requires Zn(2+) as cofactor.

Its function is as follows. Binds the 23S rRNA. The sequence is that of Large ribosomal subunit protein bL31 from Ruminiclostridium cellulolyticum (strain ATCC 35319 / DSM 5812 / JCM 6584 / H10) (Clostridium cellulolyticum).